We begin with the raw amino-acid sequence, 193 residues long: Large ribosomal subunit protein bL25 (193 aa).

This sequence belongs to the bacterial ribosomal protein bL25 family. CTC subfamily. Part of the 50S ribosomal subunit; part of the 5S rRNA/L5/L18/L25 subcomplex. Contacts the 5S rRNA. Binds to the 5S rRNA independently of L5 and L18.

Functionally, this is one of the proteins that binds to the 5S RNA in the ribosome where it forms part of the central protuberance. This chain is Large ribosomal subunit protein bL25, found in Oleidesulfovibrio alaskensis (strain ATCC BAA-1058 / DSM 17464 / G20) (Desulfovibrio alaskensis).